The primary structure comprises 305 residues: MDDFRSICLLSLAMLVACYVAGIIPLAVNFSEERLKLVTVLGAGLLCGTALAVIVPEGVHALYEDILEGKHHPANEMQHVMESEKVAEIAVVHEYGHDHSRLHAYIGVSLVLGFVFMLLVDQIGSSHVHSTDDPEAARSGNSKITTTLGLVVHAAADGVALGAAASTSQTSVQLIVFVAIMLHKAPAAFGLVSFLMHAGLERNRIRKHLLVFALAAPVMSMVTYLGLSKSSKEALSEVNATGVAMLFSAGTFLYVATVHVLPEVGGIAHSHRPESTGGKGLSRLEVAALVLGCLIPLVLSIGHHH.

A helical membrane pass occupies residues 7–27 (ICLLSLAMLVACYVAGIIPLA). N-linked (GlcNAc...) asparagine glycosylation occurs at N29. Transmembrane regions (helical) follow at residues 35 to 55 (LKLV…AVIV), 104 to 124 (AYIG…DQIG), 144 to 164 (ITTT…LGAA), 174 to 194 (LIVF…LVSF), and 208 to 228 (HLLV…LGLS). N239 is a glycosylation site (N-linked (GlcNAc...) asparagine). Transmembrane regions (helical) follow at residues 242 to 262 (GVAM…HVLP) and 284 to 304 (LEVA…IGHH).

Belongs to the ZIP transporter (TC 2.A.5) family.

The protein resides in the golgi apparatus. The protein localises to the trans-Golgi network membrane. It is found in the cell membrane. Its subcellular location is the cytoplasm. It localises to the perinuclear region. The protein resides in the mitochondrion. The protein localises to the nucleus. The catalysed reaction is Zn(2+)(in) = Zn(2+)(out). In terms of biological role, transports zinc ions across cell and organelle membranes into the cytoplasm and regulates intracellular zinc homeostasis. Participates in the zinc ions efflux out of the secretory compartments. Regulates intracellular zinc level, resulting in the enhancement of AKT1 and MAPK3/MAPK1 (Erk1/2) phosphorylation in response to the BCR activation. Also functions as a membrane androgen receptor that mediates, through a G protein, the non-classical androgen signaling pathway, characterized by the activation of MAPK3/MAPK1 (Erk1/2) and transcription factors CREB1 or ATF1. Moreover, has dual functions as a membrane-bound androgen receptor and as an androgen-dependent zinc transporter both of which are mediated through an inhibitory G protein (Gi) that mediates both MAP kinase and zinc signaling leading to the androgen-dependent apoptotic process. The chain is Zinc transporter ZIP9 from Gallus gallus (Chicken).